Here is an 85-residue protein sequence, read N- to C-terminus: Beta-insect depressant toxin Lqh-dprIT3b (85 aa).

The signal sequence occupies residues 1–21 (MKLLLLLTISASMLIEGLVNA). The region spanning 22-82 (DGYIRGGDGC…EWDYETNTCG (61 aa)) is the LCN-type CS-alpha/beta domain. Intrachain disulfides connect cysteine 31–cysteine 81, cysteine 35–cysteine 56, cysteine 42–cysteine 63, and cysteine 46–cysteine 65. Glycine amide is present on glycine 82.

The protein belongs to the long (4 C-C) scorpion toxin superfamily. Sodium channel inhibitor family. Beta subfamily. In terms of tissue distribution, expressed by the venom gland.

Its subcellular location is the secreted. Depressant insect beta-toxins cause a transient contraction paralysis followed by a slow flaccid paralysis. They bind voltage-independently at site-4 of sodium channels (Nav) and block action potentials, primarily by depolarizing the axonal membrane and suppressing the sodium current. This depressant toxin is active only on insects. It is found in a relatively small amount in the venom, and its activity on insects is 10-fold higher compared to other known depressant toxins. This Leiurus hebraeus (Hebrew deathstalker scorpion) protein is Beta-insect depressant toxin Lqh-dprIT3b.